Consider the following 463-residue polypeptide: Argininosuccinate lyase (463 aa).

Belongs to the lyase 1 family. Argininosuccinate lyase subfamily.

It localises to the cytoplasm. The catalysed reaction is 2-(N(omega)-L-arginino)succinate = fumarate + L-arginine. It functions in the pathway amino-acid biosynthesis; L-arginine biosynthesis; L-arginine from L-ornithine and carbamoyl phosphate: step 3/3. The protein is Argininosuccinate lyase of Streptococcus pneumoniae serotype 2 (strain D39 / NCTC 7466).